Reading from the N-terminus, the 338-residue chain is tRNA-cytidine(32) 2-sulfurtransferase (338 aa).

The PP-loop motif signature appears at 86–91; that stretch reads SGGKDS. Positions 161, 164, and 252 each coordinate [4Fe-4S] cluster.

The protein belongs to the TtcA family. Homodimer. It depends on Mg(2+) as a cofactor. [4Fe-4S] cluster serves as cofactor.

The protein resides in the cytoplasm. The enzyme catalyses cytidine(32) in tRNA + S-sulfanyl-L-cysteinyl-[cysteine desulfurase] + AH2 + ATP = 2-thiocytidine(32) in tRNA + L-cysteinyl-[cysteine desulfurase] + A + AMP + diphosphate + H(+). It participates in tRNA modification. Catalyzes the ATP-dependent 2-thiolation of cytidine in position 32 of tRNA, to form 2-thiocytidine (s(2)C32). The sulfur atoms are provided by the cysteine/cysteine desulfurase (IscS) system. This Albidiferax ferrireducens (strain ATCC BAA-621 / DSM 15236 / T118) (Rhodoferax ferrireducens) protein is tRNA-cytidine(32) 2-sulfurtransferase.